The chain runs to 329 residues: Replication factor C small subunit 1 (329 aa).

Residue 44 to 51 participates in ATP binding; that stretch reads GPPGTGKT.

Belongs to the activator 1 small subunits family. RfcS subfamily. Heteromultimer composed of small subunits (RfcS) and large subunits (RfcL).

In terms of biological role, part of the RFC clamp loader complex which loads the PCNA sliding clamp onto DNA. In Pyrobaculum arsenaticum (strain DSM 13514 / JCM 11321 / PZ6), this protein is Replication factor C small subunit 1.